A 289-amino-acid chain; its full sequence is Metal-staphylopine import system permease protein CntC (289 aa).

The next 5 helical transmembrane spans lie at Ala13 to Val33, Leu77 to Leu97, Val115 to Gly135, Ile194 to Phe214, and Ile249 to Ile269. Residues Ile73 to Ser262 form the ABC transmembrane type-1 domain.

This sequence belongs to the binding-protein-dependent transport system permease family. In terms of assembly, the complex is composed of two ATP-binding proteins (CntD and CntF), two transmembrane proteins (CntB and CntC) and a solute-binding protein (CntA).

It is found in the cell membrane. In terms of biological role, part of the ABC transporter complex CntABCDF (Opp1) involved in the uptake of metal in complex with the metallophore staphylopine (StP). May be involved in the import of a large array of divalent metals ions such as nickel, cobalt, zinc, copper and iron. Probably responsible for the translocation of the substrate across the membrane. This Staphylococcus aureus (strain Mu50 / ATCC 700699) protein is Metal-staphylopine import system permease protein CntC.